Consider the following 601-residue polypeptide: Potassium voltage-gated channel subfamily A member 5 (601 aa).

The tetramerization domain stretch occupies residues Met1–Glu200. Topologically, residues Met1 to Gly236 are cytoplasmic. Residues Gly19–Leu93 are disordered. The span at Arg65–Pro74 shows a compositional bias: pro residues. Residue Lys210 forms a Glycyl lysine isopeptide (Lys-Gly) (interchain with G-Cter in SUMO) linkage. A helical transmembrane segment spans residues Ser237–Leu258. Residues Glu259–Pro312 lie on the Extracellular side of the membrane. The segment at Pro275–Ser297 is disordered. Asn288 carries N-linked (GlcNAc...) asparagine glycosylation. A helical transmembrane segment spans residues Phe313–Ala334. Residue Cys335 is the site of S-palmitoyl cysteine attachment. Over Cys335–Ile345 the chain is Cytoplasmic. A helical transmembrane segment spans residues Met346–Ala366. At Glu367–Ser383 the chain is on the extracellular side. Residues Leu384 to His404 form a helical; Voltage-sensor membrane-spanning segment. Residues Ser405–Met419 are Cytoplasmic-facing. An S4-S5 linker region spans residues Lys406–Met419. A helical transmembrane segment spans residues Arg420–Tyr441. The Extracellular portion of the chain corresponds to Phe442 to Ile455. The segment at residues Pro456–Thr467 is an intramembrane region (helical). Positions Thr468–Asp473 match the Selectivity filter motif. Residues Thr468–Arg475 lie within the membrane without spanning it. At Pro476–Lys482 the chain is on the extracellular side. Residues Ile483–Tyr511 traverse the membrane as a helical segment. Over His512–Leu601 the chain is Cytoplasmic. The disordered stretch occupies residues Ala521–Ser545. Lys524 participates in a covalent cross-link: Glycyl lysine isopeptide (Lys-Gly) (interchain with G-Cter in SUMO). The PDZ-binding motif lies at Thr599–Leu601.

This sequence belongs to the potassium channel family. A (Shaker) (TC 1.A.1.2) subfamily. Kv1.5/KCNA5 sub-subfamily. As to quaternary structure, homotetramer and heterotetramer of potassium channel proteins. Interacts with DLG1, which enhances channel currents. Forms a ternary complex with DLG1 and CAV3. Interacts with KCNAB1. Interacts with UBE2I. Interacts with XIRP2; the interaction is required for normal action potential configuration in the heart. Post-translationally, glycosylated. In terms of processing, sumoylated on Lys-210, and Lys-524, preferentially with SUMO3. Sumoylation regulates the voltage sensitivity of the channel.

The protein resides in the cell membrane. It catalyses the reaction K(+)(in) = K(+)(out). Its function is as follows. Voltage-gated potassium channel that mediates transmembrane potassium transport in excitable membranes. Forms tetrameric potassium-selective channels through which potassium ions pass in accordance with their electrochemical gradient. The channel alternates between opened and closed conformations in response to the voltage difference across the membrane. Can form functional homotetrameric channels and heterotetrameric channels that contain variable proportions of KCNA1, KCNA2, KCNA4, KCNA5, and possibly other family members as well; channel properties depend on the type of alpha subunits that are part of the channel. Channel properties are modulated by cytoplasmic beta subunits that regulate the subcellular location of the alpha subunits and promote rapid inactivation. Homotetrameric channels display rapid activation and slow inactivation. Required for normal electrical conduction including formation of the infranodal ventricular conduction system and normal action potential configuration, as a result of its interaction with XIRP2. May play a role in regulating the secretion of insulin in normal pancreatic islets. This is Potassium voltage-gated channel subfamily A member 5 (KCNA5) from Mustela putorius furo (European domestic ferret).